The chain runs to 363 residues: Spermidine/putrescine import ATP-binding protein PotA (363 aa).

In terms of domain architecture, ABC transporter spans 5–236 (IKLKHVRKEY…PVNDFVARFI (232 aa)). Residue 38–45 (GPSGSGKT) coordinates ATP.

This sequence belongs to the ABC transporter superfamily. Spermidine/putrescine importer (TC 3.A.1.11.1) family. The complex is composed of two ATP-binding proteins (PotA), two transmembrane proteins (PotB and PotC) and a solute-binding protein (PotD).

The protein localises to the cell membrane. The catalysed reaction is ATP + H2O + polyamine-[polyamine-binding protein]Side 1 = ADP + phosphate + polyamineSide 2 + [polyamine-binding protein]Side 1.. Part of the ABC transporter complex PotABCD involved in spermidine/putrescine import. Responsible for energy coupling to the transport system. This chain is Spermidine/putrescine import ATP-binding protein PotA, found in Lactobacillus johnsonii (strain CNCM I-12250 / La1 / NCC 533).